The primary structure comprises 435 residues: Probable E3 ubiquitin-protein ligase makorin-1 (435 aa).

2 C3H1-type zinc fingers span residues 18–45 (WTKH…HDLT) and 48–75 (KPAA…HCKP). Residues 81–109 (LPAPQMLPLPSASLAGPSDPEPSGPTPVP) are disordered. Positions 99–108 (DPEPSGPTPV) are enriched in pro residues. The C3H1-type 3 zinc-finger motif lies at 155–182 (QLRKQLCPYAAVGECRYGINCAYLHGDV). The interval 183–210 (CYMCGLQVLHPTDNNQRSEHTKACIEAH) is makorin-type Cys-His. The segment at 228–282 (CGVCMEVVFEKANPSERRFGILSNCSHCYCLKCIRKWRSAKQFESKIIKSCPECR) adopts an RING-type zinc-finger fold. A C3H1-type 4 zinc finger spans residues 311 to 340 (GMGSKPCRYFDEGRGTCPFGSNCFYKHAFP). The segment at 345 to 369 (EEAQPQRRQTGSNSRNRNSRRTPLW) is disordered.

In terms of tissue distribution, weakly expressed in adult brain, heart and kidney.

The enzyme catalyses S-ubiquitinyl-[E2 ubiquitin-conjugating enzyme]-L-cysteine + [acceptor protein]-L-lysine = [E2 ubiquitin-conjugating enzyme]-L-cysteine + N(6)-ubiquitinyl-[acceptor protein]-L-lysine.. It participates in protein modification; protein ubiquitination. Its function is as follows. E3 ubiquitin ligase catalyzing the covalent attachment of ubiquitin moieties onto substrate proteins. This is Probable E3 ubiquitin-protein ligase makorin-1 from Seriola quinqueradiata (Five-ray yellowtail).